A 178-amino-acid chain; its full sequence is ATP synthase subunit delta (178 aa).

The protein belongs to the ATPase delta chain family. As to quaternary structure, F-type ATPases have 2 components, F(1) - the catalytic core - and F(0) - the membrane proton channel. F(1) has five subunits: alpha(3), beta(3), gamma(1), delta(1), epsilon(1). F(0) has three main subunits: a(1), b(2) and c(10-14). The alpha and beta chains form an alternating ring which encloses part of the gamma chain. F(1) is attached to F(0) by a central stalk formed by the gamma and epsilon chains, while a peripheral stalk is formed by the delta and b chains.

It localises to the cell inner membrane. Functionally, f(1)F(0) ATP synthase produces ATP from ADP in the presence of a proton or sodium gradient. F-type ATPases consist of two structural domains, F(1) containing the extramembraneous catalytic core and F(0) containing the membrane proton channel, linked together by a central stalk and a peripheral stalk. During catalysis, ATP synthesis in the catalytic domain of F(1) is coupled via a rotary mechanism of the central stalk subunits to proton translocation. Its function is as follows. This protein is part of the stalk that links CF(0) to CF(1). It either transmits conformational changes from CF(0) to CF(1) or is implicated in proton conduction. This Marinomonas sp. (strain MWYL1) protein is ATP synthase subunit delta.